Here is a 593-residue protein sequence, read N- to C-terminus: Gamma-humulene synthase (593 aa).

The span at 1–26 shows a compositional bias: polar residues; the sequence is MAQISESVSPSTDLKSTESSITSNRH. Positions 1–34 are disordered; it reads MAQISESVSPSTDLKSTESSITSNRHGNMWEDDR. Residues D343, D347, D488, and E496 each contribute to the Mg(2+) site. Positions 343-347 match the DDXXD motif motif; sequence DDLYD.

The protein belongs to the terpene synthase family. Tpsd subfamily. Mg(2+) is required as a cofactor. K(+) serves as cofactor.

It is found in the cytoplasm. It carries out the reaction (2E,6E)-farnesyl diphosphate = gamma-humulene + diphosphate. The catalysed reaction is (2E,6E)-farnesyl diphosphate = sibirene + diphosphate. The enzyme catalyses (2E,6E)-farnesyl diphosphate = longifolene + diphosphate. It catalyses the reaction (2E,6E)-farnesyl diphosphate = beta-himachalene + diphosphate. It carries out the reaction (2E,6E)-farnesyl diphosphate = gamma-himachalene + diphosphate. The catalysed reaction is (2E,6E)-farnesyl diphosphate = alpha-himachalene + diphosphate. It participates in terpene metabolism; oleoresin biosynthesis. In terms of biological role, involved in defensive oleoresin formation in conifers in response to insect attack or other injury. Involved in 52 sesquiterpene (C15) olefins biosynthesis. The protein is Gamma-humulene synthase (ag5) of Abies grandis (Grand fir).